The chain runs to 669 residues: Cell surface receptor daf-1 (669 aa).

Positions 1 to 19 (MRIRHVVFCLLALVYGAET) are cleaved as a signal peptide. The Extracellular segment spans residues 20–170 (SDDDLDERTN…APGPQQSSTW (151 aa)). 4 N-linked (GlcNAc...) asparagine glycosylation sites follow: Asn49, Asn79, Asn133, and Asn154. Residues 171 to 191 (LILTILALLTFIVLLGIAIFL) form a helical membrane-spanning segment. Residues 192-669 (TRKSWEAKFD…NDDSSRPLLG (478 aa)) lie on the Cytoplasmic side of the membrane. The GS domain occupies 262–292 (NNMKDMLDVLEETSGSGMGPTTLHKLTIGGQ). The region spanning 293–593 (IRLTGRVGSG…KRMDERQQLL (301 aa)) is the Protein kinase domain. Residues 299 to 307 (VGSGRFGNV) and Lys320 contribute to the ATP site. Catalysis depends on Asp423, which acts as the Proton acceptor. Composition is skewed to basic and acidic residues over residues 611-624 (DRKILGPQKPKDES) and 633-650 (VQKEIDREDEQENWRETA). The tract at residues 611-669 (DRKILGPQKPKDESPANGAPRIVQKEIDREDEQENWRETAKTPNGHISSNDDSSRPLLG) is disordered. The segment covering 651–661 (KTPNGHISSND) has biased composition (polar residues).

This sequence belongs to the protein kinase superfamily. TKL Ser/Thr protein kinase family. TGFB receptor subfamily. May interact with daf-4 to regulate dauer larva development. As to expression, head and ventral nerve cord from embryos to adults. Expressed in many sensory neurons. Subset of head neurons show coexpression with daf-4 when dauer/nondauer decision is made. Also expressed in non-neuronal cells: membraneous sheath surrounding the distal end of the intestine and in the distal tip cell of the gonad.

The protein localises to the membrane. It carries out the reaction L-threonyl-[receptor-protein] + ATP = O-phospho-L-threonyl-[receptor-protein] + ADP + H(+). It catalyses the reaction L-seryl-[receptor-protein] + ATP = O-phospho-L-seryl-[receptor-protein] + ADP + H(+). Its function is as follows. Probably involved in a TGF-beta pathway. May be a receptor for TGF-beta-like ligand daf-7. Controls the decision of whether or not larvae enter a developmentally arrested state, known as dauer, in response to environmental conditions. Involved in regulating entry into quiescence triggered by satiety. Involved in sensitivity to CO2 levels. In AWC neurons, acts to promote expression of srsx-3, a member of the GPCR family. The chain is Cell surface receptor daf-1 (daf-1) from Caenorhabditis elegans.